Reading from the N-terminus, the 637-residue chain is Neutral ceramidase (637 aa).

Residue His34 coordinates Mg(2+). Zn(2+) is bound by residues His96 and His204. Ser256 acts as the Nucleophile in catalysis. Zn(2+) is bound by residues Glu417 and Tyr453. Residues Asp575, Asp577, and Thr580 each contribute to the Mg(2+) site.

This sequence belongs to the neutral ceramidase family. Requires Zn(2+) as cofactor. Mg(2+) serves as cofactor.

It carries out the reaction an N-acylsphing-4-enine + H2O = sphing-4-enine + a fatty acid. The catalysed reaction is an N-acylsphinganine + H2O = sphinganine + a fatty acid. It catalyses the reaction an N-acyl-(4R)-4-hydroxysphinganine + H2O = (4R)-hydroxysphinganine + a fatty acid. The enzyme catalyses N-(9Z-octadecenoyl)-sphing-4-enine + H2O = sphing-4-enine + (9Z)-octadecenoate. It carries out the reaction N-(hexanoyl)sphing-4-enine + H2O = hexanoate + sphing-4-enine. The catalysed reaction is N-hexadecanoylsphing-4-enine + H2O = sphing-4-enine + hexadecanoate. It catalyses the reaction N-octadecanoylsphing-4-enine + H2O = sphing-4-enine + octadecanoate. The enzyme catalyses N-eicosanoyl-sphing-4-enine + H2O = eicosanoate + sphing-4-enine. It carries out the reaction N-(15Z-tetracosenoyl)-sphing-4-enine + H2O = (15Z)-tetracosenoate + sphing-4-enine. The catalysed reaction is N-tetracosanoyl-sphing-4-enine + H2O = tetracosanoate + sphing-4-enine. 90% of activity is inhibited by nickel, zinc and calcium ions. Magnesium, cobalt, copper and manganese ions inhibit between 50 and 80% of activity. In terms of biological role, catalyzes the cleavage of the N-acyl linkage of the ceramides (Cers) to yield sphingosine (Sph) and free fatty acid. Also catalyzes the synthesis of Cers from Sph and fatty acid. Cers containning C6-C24 fatty acids are well hydrolyzed, and Cers with mono unsaturated fatty acids are much more hydrolyzed than those with saturated fatty acids. This chain is Neutral ceramidase, found in Mycobacterium tuberculosis (strain ATCC 25618 / H37Rv).